The following is an 869-amino-acid chain: MSRFFRGDSSSDSSSDEEEDLYSDDEEVQEQPEEESSEDDSEEDDDDDDDSDSSSDDGAGKKTGANAFLKDDSDSDSESSGDEGVKVVKSAKNKRFEELEATAKAIENGEKINDWGSISAEFDKLNRQVAKLLQSGTIPKVYIKAIADLEDFMNETLAKQKVTPKKMNATNSRGLNAVKQKIKKASKEHQKDIDSFRADKDAYMESEDEEVVAPKQKKPRSSAAQDVAADDDDEGWGTVGKGGRTLQFTPESILKHLRTILESRGKKNTDRNEQIKIMEKLYEVAATPYQRIRVLLTIISTRFDMTTGTQTFMSQEQWKAAEKEFGTLLSVLETSREYVVVETAEPWEDDEKLPTVAEGGKFAIPGSVVSYVERLDDELTRSLQHIDPHTAEYIERLSDESDLYNNIVRTMLYQEEISKDASLNEPQRSLNRVVMRRLEHVYFKPSAVIKILDENCWKAVPAELNSTITPRGSVEDAKTLVNVLCNYLYINTEGEGLTKARAMLCQIYFEALHDNYYKARDMMLMSHLQETINSFDVHSQILFNRTLVQVGLCAFRAGLVYEAQTTLQEICGSGRQKELLAQGVMIQRYNQVTPDQERLEKQRQLPFHMHINLELLECVYLTCSMLLEIPLFAQTGSSPDIKKRVISKTYRRMLEYHERQIFTGPPENTRDHVMQASKALAQGEWKRATEFIHSIKIWELMSKPEEIKAMLSAQIQEEGLRTYLFTYAPYYDTLSVSRLSSMFDLSDRKVAAIVSKMISHEELAAALDQVSSSIIFRKGVELSRLQSLALSLSDKASGLIESNERTLETRTQGTANAFERQGGRGGRGGNRGGRGGGRGGRGGISNAPRQAGGTQFTGGALGAAVGSRA.

Disordered stretches follow at residues 1 to 92 (MSRF…KSAK) and 182 to 242 (IKKA…VGKG). The segment covering 14 to 55 (SSDEEEDLYSDDEEVQEQPEEESSEDDSEEDDDDDDDSDSSS) has biased composition (acidic residues). The span at 185-203 (ASKEHQKDIDSFRADKDAY) shows a compositional bias: basic and acidic residues. In terms of domain architecture, PCI spans 607 to 781 (FHMHINLELL…SSIIFRKGVE (175 aa)). The tract at residues 803–869 (NERTLETRTQ…ALGAAVGSRA (67 aa)) is disordered. Residues 823 to 843 (GRGGRGGNRGGRGGGRGGRGG) show a composition bias toward gly residues.

It belongs to the eIF-3 subunit C family. As to quaternary structure, component of the eukaryotic translation initiation factor 3 (eIF-3) complex.

The protein localises to the cytoplasm. Component of the eukaryotic translation initiation factor 3 (eIF-3) complex, which is involved in protein synthesis of a specialized repertoire of mRNAs and, together with other initiation factors, stimulates binding of mRNA and methionyl-tRNAi to the 40S ribosome. The eIF-3 complex specifically targets and initiates translation of a subset of mRNAs involved in cell proliferation. The chain is Eukaryotic translation initiation factor 3 subunit C (nip1) from Botryotinia fuckeliana (strain B05.10) (Noble rot fungus).